Here is a 231-residue protein sequence, read N- to C-terminus: Large ribosomal subunit protein uL1 (231 aa).

Belongs to the universal ribosomal protein uL1 family. As to quaternary structure, part of the 50S ribosomal subunit.

Its function is as follows. Binds directly to 23S rRNA. The L1 stalk is quite mobile in the ribosome, and is involved in E site tRNA release. Protein L1 is also a translational repressor protein, it controls the translation of the L11 operon by binding to its mRNA. The polypeptide is Large ribosomal subunit protein uL1 (Staphylococcus carnosus (strain TM300)).